The primary structure comprises 123 residues: Small ribosomal subunit protein uS12 (123 aa).

At D89 the chain carries 3-methylthioaspartic acid.

This sequence belongs to the universal ribosomal protein uS12 family. As to quaternary structure, part of the 30S ribosomal subunit. Contacts proteins S8 and S17. May interact with IF1 in the 30S initiation complex.

Its function is as follows. With S4 and S5 plays an important role in translational accuracy. In terms of biological role, interacts with and stabilizes bases of the 16S rRNA that are involved in tRNA selection in the A site and with the mRNA backbone. Located at the interface of the 30S and 50S subunits, it traverses the body of the 30S subunit contacting proteins on the other side and probably holding the rRNA structure together. The combined cluster of proteins S8, S12 and S17 appears to hold together the shoulder and platform of the 30S subunit. The chain is Small ribosomal subunit protein uS12 from Geotalea uraniireducens (strain Rf4) (Geobacter uraniireducens).